The sequence spans 209 residues: Large ribosomal subunit protein bL25 (209 aa).

Positions 190–209 (GLKSADDEAEGEDAEEAAAE) are disordered. The span at 196 to 209 (DEAEGEDAEEAAAE) shows a compositional bias: acidic residues.

It belongs to the bacterial ribosomal protein bL25 family. CTC subfamily. Part of the 50S ribosomal subunit; part of the 5S rRNA/L5/L18/L25 subcomplex. Contacts the 5S rRNA. Binds to the 5S rRNA independently of L5 and L18.

Its function is as follows. This is one of the proteins that binds to the 5S RNA in the ribosome where it forms part of the central protuberance. The chain is Large ribosomal subunit protein bL25 from Ruegeria sp. (strain TM1040) (Silicibacter sp.).